The following is a 95-amino-acid chain: Large ribosomal subunit protein uL23 (95 aa).

It belongs to the universal ribosomal protein uL23 family. In terms of assembly, part of the 50S ribosomal subunit. Contacts protein L29, and trigger factor when it is bound to the ribosome.

One of the early assembly proteins it binds 23S rRNA. One of the proteins that surrounds the polypeptide exit tunnel on the outside of the ribosome. Forms the main docking site for trigger factor binding to the ribosome. This is Large ribosomal subunit protein uL23 from Heliobacterium modesticaldum (strain ATCC 51547 / Ice1).